The primary structure comprises 378 residues: Cytochrome P450 2C15 (378 aa).

Cys323 serves as a coordination point for heme.

This sequence belongs to the cytochrome P450 family. The cofactor is heme.

Its subcellular location is the endoplasmic reticulum membrane. It localises to the microsome membrane. It carries out the reaction an organic molecule + reduced [NADPH--hemoprotein reductase] + O2 = an alcohol + oxidized [NADPH--hemoprotein reductase] + H2O + H(+). Functionally, cytochromes P450 are a group of heme-thiolate monooxygenases. In liver microsomes, this enzyme is involved in an NADPH-dependent electron transport pathway. It oxidizes a variety of structurally unrelated compounds, including steroids, fatty acids, and xenobiotics. This Oryctolagus cuniculus (Rabbit) protein is Cytochrome P450 2C15 (CYP2C15).